A 181-amino-acid polypeptide reads, in one-letter code: Transcription termination/antitermination protein NusG (181 aa).

The 32-residue stretch at Pro-130–Ser-161 folds into the KOW domain.

The protein belongs to the NusG family. Monomer. Interacts with the transcription termination factor Rho and with RNA polymerase.

In terms of biological role, participates in transcription elongation, termination and antitermination. In the absence of Rho, increases the rate of transcription elongation by the RNA polymerase (RNAP), probably by partially suppressing pausing. In the presence of Rho, modulates most Rho-dependent termination events by interacting with the RNAP to render the complex more susceptible to the termination activity of Rho. May be required to overcome a kinetic limitation of Rho to function at certain terminators. Also involved in ribosomal RNA transcriptional antitermination. This Salmonella typhi protein is Transcription termination/antitermination protein NusG.